A 300-amino-acid polypeptide reads, in one-letter code: MNQTYGRLVSRAAIAATAMASALLLIKIFAWWYTGSVSILAALVDSLVDIAASLTNLLVVRYSLQPADDEHTFGHGKAESLAALAQSMFISGSALFLFLTSIQNLIKPTPMNDPGVGIGVTVIALICTIILVTFQRWVVRKTQSQAVRADMLHYQSDVMMNGAILIALGLSWYGWHRADALFALGIGIYILYSALRMGYEAVQSLLDRALPDAERQEIIDIVTSWPGVSGAHDLRTRQSGPTRFIQIHLEMEDNLPLVQAHLVAEQVEQAILRRFPGSDVIIHQDPCSVVPTEGKKFELV.

A helical membrane pass occupies residues 24 to 44 (LLIKIFAWWYTGSVSILAALV). Asp45 and Asp49 together coordinate Zn(2+). The next 2 membrane-spanning stretches (helical) occupy residues 82–102 (AALA…LTSI) and 114–134 (PGVG…LVTF). Zn(2+) is bound by residues His153 and Asp157. The next 2 membrane-spanning stretches (helical) occupy residues 156-176 (SDVM…YGWH) and 178-198 (ADAL…LRMG).

The protein belongs to the cation diffusion facilitator (CDF) transporter (TC 2.A.4) family. FieF subfamily. Homodimer.

It is found in the cell inner membrane. It carries out the reaction Zn(2+)(in) + H(+)(out) = Zn(2+)(out) + H(+)(in). The catalysed reaction is Cd(2+)(in) + H(+)(out) = Cd(2+)(out) + H(+)(in). It catalyses the reaction Fe(2+)(in) + H(+)(out) = Fe(2+)(out) + H(+)(in). Functionally, divalent metal cation transporter which exports Zn(2+), Cd(2+) and possibly Fe(2+). May be involved in zinc and iron detoxification by efflux. This chain is Cation-efflux pump FieF, found in Salmonella schwarzengrund (strain CVM19633).